A 30-amino-acid polypeptide reads, in one-letter code: Sperm protamine P5 (30 aa).

The segment at 1 to 30 (YRRRRRRGRRGRRRRGRRRRSRGRRRAHGG) is disordered.

In terms of tissue distribution, testis.

The protein localises to the nucleus. The protein resides in the chromosome. Functionally, protamines substitute for histones in the chromatin of sperm during the haploid phase of spermatogenesis. They compact sperm DNA into a highly condensed, stable and inactive complex. In Octopus vulgaris (Common octopus), this protein is Sperm protamine P5.